Consider the following 161-residue polypeptide: Urease accessory protein UreE (161 aa).

This sequence belongs to the UreE family.

It is found in the cytoplasm. Involved in urease metallocenter assembly. Binds nickel. Probably functions as a nickel donor during metallocenter assembly. This is Urease accessory protein UreE from Pseudarthrobacter chlorophenolicus (strain ATCC 700700 / DSM 12829 / CIP 107037 / JCM 12360 / KCTC 9906 / NCIMB 13794 / A6) (Arthrobacter chlorophenolicus).